The following is a 330-amino-acid chain: Phosphate acyltransferase (330 aa).

It belongs to the PlsX family. Homodimer. Probably interacts with PlsY.

The protein resides in the cytoplasm. The catalysed reaction is a fatty acyl-[ACP] + phosphate = an acyl phosphate + holo-[ACP]. It functions in the pathway lipid metabolism; phospholipid metabolism. In terms of biological role, catalyzes the reversible formation of acyl-phosphate (acyl-PO(4)) from acyl-[acyl-carrier-protein] (acyl-ACP). This enzyme utilizes acyl-ACP as fatty acyl donor, but not acyl-CoA. The sequence is that of Phosphate acyltransferase from Lysinibacillus sphaericus (strain C3-41).